The sequence spans 232 residues: Large ribosomal subunit protein uL1 (232 aa).

It belongs to the universal ribosomal protein uL1 family. In terms of assembly, part of the 50S ribosomal subunit.

Its function is as follows. Binds directly to 23S rRNA. The L1 stalk is quite mobile in the ribosome, and is involved in E site tRNA release. Functionally, protein L1 is also a translational repressor protein, it controls the translation of the L11 operon by binding to its mRNA. This Burkholderia mallei (strain NCTC 10247) protein is Large ribosomal subunit protein uL1.